The chain runs to 202 residues: MITDFLLAFSILAVSTTLGVSNLNKQCRDLLQCSIQKKCVNLPVLSKLVDGKNISAEMYDDIDKYTDYGCIFTTGCQDECNDCPLCLTSKLQIVDILSGEKSSAECPTLMDCALKCVAESNQDIFQINKCLRQDCAFHCFDGSCPKCSGFITRVFNQMCAAGNFRQKIKGYSGPCYEMFHEIVRAKFADRFEKNGKTRGHSG.

The Cytoplasmic portion of the chain corresponds to 1–6 (MITDFL). Residues 7-23 (LAFSILAVSTTLGVSNL) form a helical; Signal-anchor for type II membrane protein membrane-spanning segment. Residues 24 to 202 (NKQCRDLLQC…KNGKTRGHSG (179 aa)) are Extracellular-facing. A glycan (N-linked (GlcNAc...) asparagine) is linked at Asn53.

It localises to the membrane. This is an uncharacterized protein from Caenorhabditis elegans.